We begin with the raw amino-acid sequence, 128 residues long: MAGKNQSQKKKKSTAPMGNGQPVNQLCQLLGAMIKSQRQQPRGGQAKKKKPEKPHFPLAAEDDIRHHLTQTERSLCLQSIQTAFNQGAGTASLSSSGKVSFQVEFMLPVAHTVRLIRVTSTSASQGAN.

The interval 1–60 (MAGKNQSQKKKKSTAPMGNGQPVNQLCQLLGAMIKSQRQQPRGGQAKKKKPEKPHFPLAA) is disordered.

The protein belongs to the arteriviridae nucleocapsid family.

The protein resides in the virion. The protein is Nucleoprotein (N) of Porcine reproductive and respiratory syndrome virus (isolate Pig/United States/SD 01-08/2001) (PRRSV).